A 707-amino-acid chain; its full sequence is Polyribonucleotide nucleotidyltransferase (707 aa).

Positions 485 and 491 each coordinate Mg(2+). The 60-residue stretch at 552–611 (PRIYTMKIDPKKIKDVIGKGGATIRTLTEETGTSIDIDDDGTVKIAAIDGNAVKEVMARI) folds into the KH domain. The S1 motif domain maps to 621-689 (GAVYTGKVTR…RQGRIRLTMK (69 aa)).

Belongs to the polyribonucleotide nucleotidyltransferase family. Component of the RNA degradosome, which is a multiprotein complex involved in RNA processing and mRNA degradation. It depends on Mg(2+) as a cofactor.

It localises to the cytoplasm. The enzyme catalyses RNA(n+1) + phosphate = RNA(n) + a ribonucleoside 5'-diphosphate. Involved in mRNA degradation. Catalyzes the phosphorolysis of single-stranded polyribonucleotides processively in the 3'- to 5'-direction. The sequence is that of Polyribonucleotide nucleotidyltransferase from Actinobacillus succinogenes (strain ATCC 55618 / DSM 22257 / CCUG 43843 / 130Z).